Here is a 357-residue protein sequence, read N- to C-terminus: Putative electron transport protein YccM (357 aa).

At 1–36 (MAENKRTRWQRRPGTTGGKLPWNDWRNATTWRKATQ) the chain is on the cytoplasmic side. The helical transmembrane segment at 37 to 54 (LLLLAMNIYIAITFWYWV) threads the bilayer. Over 55–91 (RYYETASSTTFVARPGGIEGWLPIAGLMNLKYSLVTG) the chain is Periplasmic. Residues 92–114 (QLPSVHAAAMLLLVAFIVISLLL) traverse the membrane as a helical segment. Residues 115 to 158 (KKAFCSWLCPVGTLSELIGDLGNKLFGRQCVLPRWLDIPLRGVK) lie on the Cytoplasmic side of the membrane. A helical transmembrane segment spans residues 159–181 (YLLLSFFIYIALLMPAQAIHYFM). At 182–195 (LSPYSVVMDVKMLD) the chain is on the periplasmic side. Residues 196-218 (FFRHMGTATLISVTVLLIASLFI) form a helical membrane-spanning segment. Over 219–309 (RHAWCRYLCP…KPAANKKAFA (91 aa)) the chain is Cytoplasmic. 4Fe-4S ferredoxin-type domains follow at residues 242-270 (FKIR…VDKL) and 269-299 (KLIQ…FSLQ). Cysteine 251, cysteine 254, cysteine 257, cysteine 261, cysteine 278, cysteine 281, cysteine 284, and cysteine 288 together coordinate [4Fe-4S] cluster. A helical transmembrane segment spans residues 310–332 (LSGWLMTLLVLGIMFAVIGYAMY). The Periplasmic segment spans residues 333–357 (AGVWQSPVPEELYRRLIPQAPMIGH).

The protein localises to the cell inner membrane. This chain is Putative electron transport protein YccM (yccM), found in Escherichia coli (strain K12).